Consider the following 170-residue polypeptide: Cathelicidin antimicrobial peptide (170 aa).

The signal sequence occupies residues 1-30; that stretch reads MKTQRHGPSLGRWSLVLLLLGLVMPLAIVA. Residues 31-131 constitute a propeptide, cathelin-like domain (CLD); that stretch reads QVLSYQEAVL…DISCDKDNRR (101 aa). Disulfide bonds link cysteine 86–cysteine 97 and cysteine 108–cysteine 125. The tract at residues 150–162 is active core; the sequence is LKKIGQKIKDFWG.

The protein belongs to the cathelicidin family. As to quaternary structure, monomer, homodimer or homotrimer (in vitro). Oligomerizes as tetra- or hexamer in solution (in vitro). In terms of processing, proteolytically cleaved by proteinase PRTN3 into antibacterial peptide LL-37. Proteolytically cleaved by cathepsin CTSG and neutrophil elastase ELANE. Post-translationally, resistant to proteolytic degradation in solution, and when bound to both zwitterionic (mimicking mammalian membranes) and negatively charged membranes (mimicking bacterial membranes). After secretion onto the skin surface, the CAMP gene product is processed by a serine protease-dependent mechanism into multiple novel antimicrobial peptides distinct from and shorter than cathelicidin LL-37. These peptides show enhanced antimicrobial action, acquiring the ability to kill skin pathogens such as S.aureus, E.coli and C.albicans. These peptides have lost the ability to stimulate CXCL8/IL8 release from keratinocytes. The peptides act synergistically, killing bacteria at lower concentrations when present together, and maintain activity at increased salt condition.

Its subcellular location is the secreted. It is found in the vesicle. Antimicrobial protein that is an integral component of the innate immune system. Binds to bacterial lipopolysaccharides (LPS). Acts via neutrophil N-formyl peptide receptors to enhance the release of CXCL2. Postsecretory processing generates multiple cathelicidin antimicrobial peptides with various lengths which act as a topical antimicrobial defense in sweat on skin. The unprocessed precursor form, cathelicidin antimicrobial peptide, inhibits the growth of Gram-negative E.coli and E.aerogenes with efficiencies comparable to that of the mature peptide LL-37 (in vitro). Functionally, antimicrobial peptide that is an integral component of the innate immune system. Binds to bacterial lipopolysaccharides (LPS). Causes membrane permeabilization by forming transmembrane pores (in vitro). Causes lysis of E.coli. Exhibits antimicrobial activity against Gram-negative bacteria such as P.aeruginosa, S.typhimurium, E.aerogenes, E.coli and P.syringae, Gram-positive bacteria such as L.monocytogenes, S.epidermidis, S.pyogenes and S.aureus, as well as vancomycin-resistant enterococci (in vitro). Exhibits antimicrobial activity against methicillin-resistant S.aureus, P.mirabilis, and C.albicans in low-salt media, but not in media containing 100 mM NaCl (in vitro). Forms chiral supramolecular assemblies with quinolone signal (PQS) molecules of P.aeruginosa, which may lead to interference of bacterial quorum signaling and perturbance of bacterial biofilm formation. May form supramolecular fiber-like assemblies on bacterial membranes. Induces cytokine and chemokine producation as well as TNF/TNFA and CSF2/GMCSF production in normal human keratinocytes. Exhibits hemolytic activity against red blood cells. In terms of biological role, exhibits antimicrobial activity against E.coli and B.megaterium (in vitro). This chain is Cathelicidin antimicrobial peptide, found in Trachypithecus cristatus (Silvered leaf-monkey).